A 246-amino-acid polypeptide reads, in one-letter code: UPF0309 protein TTE0306 (246 aa).

An SIS domain is found at 31–212; that stretch reads ITESLISEDS…EAEIITNMLE (182 aa).

Belongs to the UPF0309 family.

This chain is UPF0309 protein TTE0306, found in Caldanaerobacter subterraneus subsp. tengcongensis (strain DSM 15242 / JCM 11007 / NBRC 100824 / MB4) (Thermoanaerobacter tengcongensis).